The following is a 718-amino-acid chain: Pullulanase (718 aa).

The Nucleophile role is filled by Asp406. Glu435 functions as the Proton donor in the catalytic mechanism.

This sequence belongs to the glycosyl hydrolase 13 family.

The catalysed reaction is Hydrolysis of (1-&gt;6)-alpha-D-glucosidic linkages in pullulan, amylopectin and glycogen, and in the alpha- and beta-limit dextrins of amylopectin and glycogen.. The polypeptide is Pullulanase (amyX) (Bacillus subtilis (strain 168)).